Consider the following 714-residue polypeptide: Methyl-accepting chemotaxis protein TlpQ (714 aa).

A helical transmembrane segment spans residues 12–32; the sequence is ITLLAGLCLLGVVALLVGLSV. The Cache domain occupies 50–290; that stretch reads LDESARLRLE…LLGKNLAKAD (241 aa). Residues E170, 208 to 210, and D239 each bind histamine; that span reads YFD. The helical transmembrane segment at 360 to 380 threads the bilayer; sequence TWVELGLGLGAAVLGLLVLWL. Residues 383–437 form the HAMP domain; sequence RGVTRPILGVAHMLRDIASGEGDLTQRLPHTGRDELGELAGWFNRFLDKLQPIIR. Positions 442–678 constitute a Methyl-accepting transducer domain; that stretch reads SVRDARSTAD…EINRNVAAIR (237 aa).

Belongs to the methyl-accepting chemotaxis (MCP) protein family. In terms of assembly, homotetramer.

It is found in the cell membrane. Its function is as follows. Chemotactic-signal transducers respond to changes in the concentration of attractants and repellents in the environment, transduce a signal from the outside to the inside of the cell, and facilitate sensory adaptation through the variation of the level of methylation. TlpQ is a chemoreceptor that binds and mediates chemotaxis to histamine, a key biological signaling molecule. It binds histamine with high affinity, which permits responses to very low histamine concentrations. Chemotaxis to histamine may play a role in the virulence of P.aeruginosa by recruiting cells at the infection site and consequently modulating the expression of quorum-sensing-dependent virulence genes. TlpQ also binds and mediates chemotaxis to polyamines such as putrescine, spermidine, cadaverine, agmatine and ethylenediamine. In addition, binds the quorum-sensing signal autoinducer 2 (AI-2), thus inducing chemotaxis toward AI-2 and biofilm formation. The sequence is that of Methyl-accepting chemotaxis protein TlpQ from Pseudomonas aeruginosa (strain ATCC 15692 / DSM 22644 / CIP 104116 / JCM 14847 / LMG 12228 / 1C / PRS 101 / PAO1).